A 333-amino-acid chain; its full sequence is Elongation factor Ts, mitochondrial (333 aa).

The transit peptide at 1 to 17 (MLRTLRPTLPSRCLRLY) directs the protein to the mitochondrion.

Belongs to the EF-Ts family.

Its subcellular location is the mitochondrion. Associates with the EF-Tu.GDP complex and induces the exchange of GDP to GTP. It remains bound to the aminoacyl-tRNA.EF-Tu.GTP complex up to the GTP hydrolysis stage on the ribosome. The protein is Elongation factor Ts, mitochondrial of Coprinopsis cinerea (strain Okayama-7 / 130 / ATCC MYA-4618 / FGSC 9003) (Inky cap fungus).